The primary structure comprises 160 residues: Transcription elongation factor GreA (160 aa).

A coiled-coil region spans residues 8-28; the sequence is LTEEGLKQLEAELEHLIQVKR.

It belongs to the GreA/GreB family.

In terms of biological role, necessary for efficient RNA polymerase transcription elongation past template-encoded arresting sites. The arresting sites in DNA have the property of trapping a certain fraction of elongating RNA polymerases that pass through, resulting in locked ternary complexes. Cleavage of the nascent transcript by cleavage factors such as GreA or GreB allows the resumption of elongation from the new 3'terminus. GreA releases sequences of 2 to 3 nucleotides. The chain is Transcription elongation factor GreA from Mycoplasma pneumoniae (strain ATCC 29342 / M129 / Subtype 1) (Mycoplasmoides pneumoniae).